The following is a 275-amino-acid chain: MTRKIAIYGKGGIGKSTTTQNTAAALAFFHEKNVFIHGCDPKADSTRLILGGLPQQTVMDTLRIEGAERVTVDKVVKTGFKDIRCVESGGPEPGVGCAGRGVITAIDLMEENEAYSEDLDFLFFDVLGDVVCGGFAMPIRDGKAEEVYIVASGEMMAIYAANNICKGLAKYARQSGVRLGGIICNSRNVDGEKEFLEEFTKAIGTKMIHFVPRDNIVQKAEFNKQTVTEFQPEANQAQEYRELGRKIIENEDFVIPKPLAMDELEAMVVKYGLMD.

Residue 9 to 16 (GKGGIGKS) coordinates ATP. A [4Fe-4S] cluster-binding site is contributed by cysteine 97. At arginine 100 the chain carries ADP-ribosylarginine; by dinitrogenase reductase ADP-ribosyltransferase. Residue cysteine 132 coordinates [4Fe-4S] cluster.

This sequence belongs to the NifH/BchL/ChlL family. In terms of assembly, homodimer. Requires [4Fe-4S] cluster as cofactor. Post-translationally, the reversible ADP-ribosylation of Arg-100 inactivates the nitrogenase reductase and regulates nitrogenase activity.

The catalysed reaction is N2 + 8 reduced [2Fe-2S]-[ferredoxin] + 16 ATP + 16 H2O = H2 + 8 oxidized [2Fe-2S]-[ferredoxin] + 2 NH4(+) + 16 ADP + 16 phosphate + 6 H(+). The key enzymatic reactions in nitrogen fixation are catalyzed by the nitrogenase complex, which has 2 components: the iron protein (component 2) and a component 1 which is either a molybdenum-iron protein, a vanadium-iron, or an iron-iron protein. The sequence is that of Nitrogenase iron protein 2 (anfH) from Rhodobacter capsulatus (Rhodopseudomonas capsulata).